The primary structure comprises 615 residues: AP-1-like transcription factor yap1 (615 aa).

Residues 27 to 50 (SSNNPTQKQQTVTHNSEANQNLNH) are compositionally biased toward polar residues. Disordered stretches follow at residues 27 to 84 (SSNN…EDSP) and 99 to 180 (NESL…RKEK). A Bipartite nuclear localization signal motif is present at residues 35 to 42 (QQTVTHNS). Residues 52–67 (PGHASSGSFSVSPPSG) show a composition bias toward low complexity. A Bipartite nuclear localization signal motif is present at residues 68–75 (LDGSVNQS). The segment covering 118-147 (PGDKRKDIDGQVNDKEDSGKKRRESDEKAA) has biased composition (basic and acidic residues). The region spanning 157-220 (SEPTSKRKAQ…ERLQLELKEY (64 aa)) is the bZIP domain. Positions 162–183 (KRKAQNRAAQRAFRERKEKHLK) are basic motif. Positions 185–192 (LEAKVEEL) are leucine-zipper. The tract at residues 214–364 (QLELKEYRKR…RGYQVNSSYS (151 aa)) is transcription activation 1. Residues 270–294 (LFTNTQTSKSNQNKAKDNPTATPRS) are compositionally biased toward polar residues. The disordered stretch occupies residues 270–416 (LFTNTQTSKS…AVKATESSTP (147 aa)). The segment at 289 to 301 (TATPRSEAQVPGV) is n-CRD. The span at 310–321 (SSPNGLSNGPSP) shows a compositional bias: low complexity. 2 stretches are compositionally biased toward polar residues: residues 322–344 (AKST…SGTL) and 358–369 (QVNSSYSASTKQ). Residues 372–394 (HDTPSSDSPSSSSDSHQSQLLSS) show a composition bias toward low complexity. Residues 409–508 (KATESSTPHA…SQDFGTFFDD (100 aa)) form a transcription activation 2 region. Intrachain disulfides connect C562–C586, C562–C595, and C586–C595. The interval 562–595 (CNKIWDRLQSMEKFRNGEIDVDNLCSELRTKARC) is c-CRD. A Nuclear export signal motif is present at residues 580–587 (IDVDNLCS).

It belongs to the bZIP family. YAP subfamily. Post-translationally, depending on the oxidative stress inducing agent, yap1 can undergo two distinct conformational changes, both involving disulfide bond formation, and both masking the nuclear export signal, thus abolishing nuclear export.

Its subcellular location is the nucleus. The protein localises to the cytoplasm. Functionally, transcription activator involved in oxidative stress response and redox homeostasis. Regulates the transcription of genes encoding antioxidant enzymes and components of the cellular thiol-reducing pathways, including thioredoxin peroxidase (aspF3), cytochrome peroxidase, and the protein AFUA_3G00730, which appears to belong to the glutathione S-transferase family. Proteins of the protein degradation pathway are also regulated by yap1, as well the p-nitroreductase family protein AFUA_5G09910. May be involved in antifungal resistance to voriconazole. The polypeptide is AP-1-like transcription factor yap1 (Aspergillus fumigatus (strain ATCC MYA-4609 / CBS 101355 / FGSC A1100 / Af293) (Neosartorya fumigata)).